The following is a 269-amino-acid chain: 5'-nucleotidase SurE (269 aa).

Positions 11, 12, 43, and 101 each coordinate a divalent metal cation.

It belongs to the SurE nucleotidase family. The cofactor is a divalent metal cation.

The protein resides in the cytoplasm. It catalyses the reaction a ribonucleoside 5'-phosphate + H2O = a ribonucleoside + phosphate. In terms of biological role, nucleotidase that shows phosphatase activity on nucleoside 5'-monophosphates. This is 5'-nucleotidase SurE from Prochlorococcus marinus (strain AS9601).